Here is an 821-residue protein sequence, read N- to C-terminus: V-type proton ATPase subunit a3 (821 aa).

Alanine 2 is modified (N-acetylalanine). The Cytoplasmic segment spans residues alanine 2–threonine 421. A coiled-coil region spans residues lysine 97–alanine 144. Serine 174 is modified (phosphoserine). A helical membrane pass occupies residues phenylalanine 422–alanine 442. Over threonine 443–arginine 469 the chain is Vacuolar. The helical transmembrane segment at tyrosine 470–phenylalanine 490 threads the bilayer. Over serine 491–lysine 548 the chain is Cytoplasmic. A helical membrane pass occupies residues methionine 549 to alanine 569. Over arginine 570 to glutamine 581 the chain is Vacuolar. A helical membrane pass occupies residues phenylalanine 582–isoleucine 602. The Cytoplasmic segment spans residues lysine 603–glutamine 640. The chain crosses the membrane as a helical span at residues leucine 641–isoleucine 661. At leucine 662–proline 758 the chain is on the vacuolar side. Residues leucine 759–methionine 779 form a helical membrane-spanning segment. The Cytoplasmic segment spans residues glutamate 780–glutamate 821.

Belongs to the V-ATPase 116 kDa subunit family. In terms of assembly, V-ATPase is a heteromultimeric enzyme composed of a peripheral catalytic V1 complex (components A to H) attached to an integral membrane V0 proton pore complex (components: a, c, c'', d and e). Expressed in etiolated seedlings hypocotyls.

It is found in the vacuole membrane. Essential component of the vacuolar proton pump (V-ATPase), a multimeric enzyme that catalyzes the translocation of protons across the membranes. Required for assembly and activity of the V-ATPase. Involved in vacuolar nutrient storage (e.g. accumulation and storage of nitrate) and in tolerance to some toxic ions (e.g. zinc ions sequestration in vacuoles). The polypeptide is V-type proton ATPase subunit a3 (VHA-a3) (Arabidopsis thaliana (Mouse-ear cress)).